A 178-amino-acid polypeptide reads, in one-letter code: Napin-B (178 aa).

Residues 1–21 form the signal peptide; the sequence is MANKLFLVSATLAFFFLLTNA. 2 consecutive propeptides follow at residues 22–38 and 75–94; these read SIYRTVVEFDEDDATNP and PSWTLDGEFDFEDDMENPQG.

The protein belongs to the 2S seed storage albumins family. In terms of assembly, the mature protein consists of a small and a large chain linked by disulfide bonds. Cotyledons and the axis.

In terms of biological role, the small, basic, water-soluble napins are one of the two major kinds of storage proteins synthesized in the seed during its maturation. The chain is Napin-B (NAPB) from Brassica napus (Rape).